The sequence spans 351 residues: Methionine import ATP-binding protein MetN (351 aa).

In terms of domain architecture, ABC transporter spans 4 to 249 (VQLDHVSVTF…PKAELTQKFV (246 aa)). 41–48 (GFSGAGKS) serves as a coordination point for ATP.

Belongs to the ABC transporter superfamily. Methionine importer (TC 3.A.1.24) family. As to quaternary structure, the complex is composed of two ATP-binding proteins (MetN), two transmembrane proteins (MetI) and a solute-binding protein (MetQ).

The protein localises to the cell membrane. It catalyses the reaction L-methionine(out) + ATP + H2O = L-methionine(in) + ADP + phosphate + H(+). The catalysed reaction is D-methionine(out) + ATP + H2O = D-methionine(in) + ADP + phosphate + H(+). Part of the ABC transporter complex MetNIQ involved in methionine import. Responsible for energy coupling to the transport system. In Lactobacillus delbrueckii subsp. bulgaricus (strain ATCC BAA-365 / Lb-18), this protein is Methionine import ATP-binding protein MetN.